A 928-amino-acid polypeptide reads, in one-letter code: Probable outer membrane protein pmp11 (928 aa).

Residues 1-24 (MKTSIPWVLVSSVLAFSCHLQSLA) form the signal peptide. The Autotransporter domain occupies 627–928 (GMEHKQGFWV…NVDVGTKLRF (302 aa)).

Belongs to the PMP outer membrane protein family.

The protein localises to the secreted. It localises to the cell wall. It is found in the cell outer membrane. This Chlamydia pneumoniae (Chlamydophila pneumoniae) protein is Probable outer membrane protein pmp11 (pmp11).